A 236-amino-acid chain; its full sequence is L-aspartate dehydrogenase (236 aa).

NAD(+) is bound by residues 10–11 (AI), D31, 58–59 (AS), Y66, 80–81 (LS), A111, and N162. Residue H189 is part of the active site. 212 to 215 (NPKT) contributes to the NAD(+) binding site.

It belongs to the L-aspartate dehydrogenase family. As to quaternary structure, homodimer.

It catalyses the reaction L-aspartate + NADP(+) + H2O = oxaloacetate + NH4(+) + NADPH + H(+). It carries out the reaction L-aspartate + NAD(+) + H2O = oxaloacetate + NH4(+) + NADH + H(+). It participates in cofactor biosynthesis; NAD(+) biosynthesis; iminoaspartate from L-aspartate (dehydrogenase route): step 1/1. Functionally, specifically catalyzes the NAD or NADP-dependent dehydrogenation of L-aspartate to iminoaspartate. This chain is L-aspartate dehydrogenase, found in Archaeoglobus fulgidus (strain ATCC 49558 / DSM 4304 / JCM 9628 / NBRC 100126 / VC-16).